Consider the following 185-residue polypeptide: Peptidyl-tRNA hydrolase (185 aa).

Y14 provides a ligand contact to tRNA. H19 acts as the Proton acceptor in catalysis. The tRNA site is built by Y64, N66, and N112.

Belongs to the PTH family. As to quaternary structure, monomer.

The protein resides in the cytoplasm. The enzyme catalyses an N-acyl-L-alpha-aminoacyl-tRNA + H2O = an N-acyl-L-amino acid + a tRNA + H(+). In terms of biological role, hydrolyzes ribosome-free peptidyl-tRNAs (with 1 or more amino acids incorporated), which drop off the ribosome during protein synthesis, or as a result of ribosome stalling. Functionally, catalyzes the release of premature peptidyl moieties from peptidyl-tRNA molecules trapped in stalled 50S ribosomal subunits, and thus maintains levels of free tRNAs and 50S ribosomes. The polypeptide is Peptidyl-tRNA hydrolase (Pediococcus pentosaceus (strain ATCC 25745 / CCUG 21536 / LMG 10740 / 183-1w)).